Consider the following 283-residue polypeptide: MDIIQAIVLGIIQGLTEFLPISSSAHLRIFPALLGWDDPGAAFTAIIQIGTLAAVLIYFYQDILRITSATISGLVNRNPFGSQDSRMGWMISAGTIPIVVLGLLFKKNIETTFRSLYIISGSLILLALVLMYAEYLVKKREARGEKMLSLDKVDWKEAIIIGLAQSLALIPGSSRSGTTITGGLFLGMTRETAARFSFLLSLPAVFAAGVYQLLKVWPELMASGDELVNLTVATVVSGVIGYASIAFLLDYLKKHSTYLFIIYRILLGVFLLAMLSMGKLEAF.

7 helical membrane passes run 1–21 (MDIIQAIVLGIIQGLTEFLPI), 40–60 (GAAFTAIIQIGTLAAVLIYFY), 85–105 (SRMGWMISAGTIPIVVLGLLF), 117–137 (YIISGSLILLALVLMYAEYLV), 196–216 (FSFLLSLPAVFAAGVYQLLKV), 232–252 (VATVVSGVIGYASIAFLLDYL), and 258–278 (YLFIIYRILLGVFLLAMLSMG).

Belongs to the UppP family.

Its subcellular location is the cell inner membrane. It catalyses the reaction di-trans,octa-cis-undecaprenyl diphosphate + H2O = di-trans,octa-cis-undecaprenyl phosphate + phosphate + H(+). In terms of biological role, catalyzes the dephosphorylation of undecaprenyl diphosphate (UPP). Confers resistance to bacitracin. In Chloroherpeton thalassium (strain ATCC 35110 / GB-78), this protein is Undecaprenyl-diphosphatase.